The primary structure comprises 424 residues: Serine--tRNA ligase (424 aa).

231–233 (TAE) serves as a coordination point for L-serine. Residue 262–264 (RSE) participates in ATP binding. Position 285 (E285) interacts with L-serine. Residue 349-352 (EISS) participates in ATP binding. S385 contributes to the L-serine binding site.

The protein belongs to the class-II aminoacyl-tRNA synthetase family. Type-1 seryl-tRNA synthetase subfamily. As to quaternary structure, homodimer. The tRNA molecule binds across the dimer.

The protein localises to the cytoplasm. The catalysed reaction is tRNA(Ser) + L-serine + ATP = L-seryl-tRNA(Ser) + AMP + diphosphate + H(+). The enzyme catalyses tRNA(Sec) + L-serine + ATP = L-seryl-tRNA(Sec) + AMP + diphosphate + H(+). It participates in aminoacyl-tRNA biosynthesis; selenocysteinyl-tRNA(Sec) biosynthesis; L-seryl-tRNA(Sec) from L-serine and tRNA(Sec): step 1/1. In terms of biological role, catalyzes the attachment of serine to tRNA(Ser). Is also able to aminoacylate tRNA(Sec) with serine, to form the misacylated tRNA L-seryl-tRNA(Sec), which will be further converted into selenocysteinyl-tRNA(Sec). In Bacillus anthracis (strain A0248), this protein is Serine--tRNA ligase.